The following is a 129-amino-acid chain: MKAVTYDTDSELAYIYVLPPKKNRNVRTEELRVNDCLLLDISQDGKIAGFECFGEAAHLCAPFAGKSRLYVKDSDGYHFRVCQHASVRSCYTVYRVTFCFSDGDYQEFAGFDLDGTMYHSAFLQRLTEK.

This is an uncharacterized protein from Bacillus subtilis (strain 168).